The chain runs to 509 residues: Metal transporter Nramp3 (509 aa).

Positions 1-12 are enriched in low complexity; it reads MPQLENNEPLLI. The disordered stretch occupies residues 1-25; it reads MPQLENNEPLLINEEEEEETAYDET. Positions 13–23 are enriched in acidic residues; sequence NEEEEEETAYD. Helical transmembrane passes span 56–76, 84–104, 133–153, 165–185, 193–213, 239–259, 285–305, 327–347, 383–403, 406–426, 444–464, and 472–492; these read LWLFTGPGFLMSIAFLDPGNL, AVAGYSLLWLLMWATAMGLLV, MVLWVMAELALIGSDIQEVIG, ILPLWAGVVITALDCFVFLFL, LEAVFAVLIATMGVSFAWMFG, AVGVVGCIIMPHNVFLHSALV, IALFISFLINLFVTTVFAKGF, YGGGVFPILYIWAIGLLAAGQ, IIPTIIVALVFDSSEATLDVL, WLNVLQSIQIPFALIPLLCLV, IAWLVAALVIMINGYLLLEFF, and VYTGFVTLFTASYGAFILYLI.

It belongs to the NRAMP (TC 2.A.55) family. As to expression, expressed in vascular tissues.

The protein resides in the vacuole membrane. Functionally, vacuolar metal transporter involved in intracellular metal homeostasis. Can transport iron (Fe), manganese (Mn) and cadmium (Cd). Regulates metal accumulation under Fe starvation. Acts redundantly with NRAMP4 to mobilize vacuolar Fe and provide sufficient Fe during seed germination. In association with NRAMP4, required for optimal growth and photosynthesis under Mn deficiency. Exports Mn from vacuoles in leaf mesophyll cells, making Mn available for functional photosystem II in chloroplasts. Involved in basal resistance to the bacterial pathogen E.chrysanthemi. The sequence is that of Metal transporter Nramp3 (NRAMP3) from Arabidopsis thaliana (Mouse-ear cress).